A 102-amino-acid chain; its full sequence is Co-chaperonin GroES (102 aa).

It belongs to the GroES chaperonin family. Heptamer of 7 subunits arranged in a ring. Interacts with the chaperonin GroEL.

It localises to the cytoplasm. Together with the chaperonin GroEL, plays an essential role in assisting protein folding. The GroEL-GroES system forms a nano-cage that allows encapsulation of the non-native substrate proteins and provides a physical environment optimized to promote and accelerate protein folding. GroES binds to the apical surface of the GroEL ring, thereby capping the opening of the GroEL channel. The chain is Co-chaperonin GroES from Chlamydia muridarum (strain MoPn / Nigg).